Here is a 398-residue protein sequence, read N- to C-terminus: Homeobox protein knotted-1-like 1 (398 aa).

Disordered regions lie at residues 43-69, 172-192, and 234-277; these read TFHLQSSGGGGGGGSGDQCNFQSPGTH, EFEARQRSSGTSRETSKDPEL, and NNNA…PRAE. Residues 49–58 are compositionally biased toward gly residues; it reads SGGGGGGGSG. The region spanning 280 to 300 is the ELK domain; sequence ELKNHLLRKYSGYLSSLKQEL. A DNA-binding region (homeobox; TALE-type) is located at residues 301–364; the sequence is SKKKKKGKLP…NQRKRHWKPS (64 aa).

It belongs to the TALE/KNOX homeobox family. Expressed only in the stems.

The protein localises to the nucleus. In terms of biological role, probably binds to the DNA sequence 5'-TGAC-3'. The sequence is that of Homeobox protein knotted-1-like 1 from Malus domestica (Apple).